The following is a 514-amino-acid chain: Beta-galactoside alpha-2,6-sialyltransferase 2 (514 aa).

The Cytoplasmic segment spans residues 1 to 10; that stretch reads MKSSLKQWRR. Residues 11 to 31 traverse the membrane as a helical; Signal-anchor for type II membrane protein segment; the sequence is LALGLILVWALLFLALLSYFM. The Lumenal segment spans residues 32 to 514; it reads ESRVDDPHAA…PGFNKVHCEP (483 aa). Over residues 70 to 92 the composition is skewed to low complexity; the sequence is ATSSAPSTSSNTQQEQSQEENPS. Positions 70-183 are disordered; sequence ATSSAPSTSS…TKRVARHGSS (114 aa). A compositionally biased stretch (polar residues) spans 119–132; sequence FGTQDVGSRSTGVS. Residues 145–166 are compositionally biased toward acidic residues; it reads PQEDEDEEEEVIGGEEEDEEGG. 3 disulfides stabilise this stretch: Cys-246-Cys-512, Cys-289-Cys-441, and Cys-459-Cys-470. Residues Asn-330, Asn-350, and Asn-357 are each glycosylated (N-linked (GlcNAc...) asparagine).

The protein belongs to the glycosyltransferase 29 family.

It localises to the golgi apparatus. The protein resides in the golgi stack membrane. The enzyme catalyses a beta-D-galactoside + CMP-N-acetyl-beta-neuraminate = an N-acetyl-alpha-neuraminyl-(2-&gt;6)-beta-D-galactosyl derivative + CMP + H(+). Transfers sialic acid from the donor of substrate CMP-sialic acid to galactose containing acceptor substrates. The chain is Beta-galactoside alpha-2,6-sialyltransferase 2 (st6gal2) from Danio rerio (Zebrafish).